We begin with the raw amino-acid sequence, 365 residues long: Heme A synthase (365 aa).

The next 5 membrane-spanning stretches (helical) occupy residues 23–43, 109–129, 137–157, 172–192, and 208–228; these read LLRI…LVGG, LLAR…WLTG, LPLV…WWMV, LATH…ILRG, and GFAA…ALVA. Residue H272 participates in heme binding. The next 3 helical transmembrane spans lie at 274–294, 303–323, and 327–347; these read LGAY…ARAL, AVLF…TLLM, and IHVA…SVAH. H333 contributes to the heme binding site.

The protein belongs to the COX15/CtaA family. Type 2 subfamily. As to quaternary structure, interacts with CtaB. Requires heme b as cofactor.

The protein localises to the cell membrane. The catalysed reaction is Fe(II)-heme o + 2 A + H2O = Fe(II)-heme a + 2 AH2. It participates in porphyrin-containing compound metabolism; heme A biosynthesis; heme A from heme O: step 1/1. Functionally, catalyzes the conversion of heme O to heme A by two successive hydroxylations of the methyl group at C8. The first hydroxylation forms heme I, the second hydroxylation results in an unstable dihydroxymethyl group, which spontaneously dehydrates, resulting in the formyl group of heme A. The chain is Heme A synthase from Agrobacterium fabrum (strain C58 / ATCC 33970) (Agrobacterium tumefaciens (strain C58)).